The sequence spans 78 residues: Translational regulator CsrA (78 aa).

This sequence belongs to the CsrA/RsmA family. In terms of assembly, homodimer; the beta-strands of each monomer intercalate to form a hydrophobic core, while the alpha-helices form wings that extend away from the core.

The protein resides in the cytoplasm. Functionally, a translational regulator that binds mRNA to regulate translation initiation and/or mRNA stability. Usually binds in the 5'-UTR at or near the Shine-Dalgarno sequence preventing ribosome-binding, thus repressing translation. Its main target seems to be the major flagellin gene, while its function is anatagonized by FliW. This is Translational regulator CsrA from Borrelia hermsii (strain HS1 / DAH).